The following is a 484-amino-acid chain: NADH-quinone oxidoreductase subunit N (484 aa).

Helical transmembrane passes span 11–31 (SLWI…VLLI), 42–62 (VTYY…FNLI), 79–98 (MASV…MVYS), 113–133 (FVLV…YSLL), 134–154 (TLYL…AIAR), 167–187 (FVLG…IYGI), 211–231 (LIIN…LGAV), 248–268 (VTLF…VRIL), 279–299 (WSDL…VVAL), 313–333 (ISHV…GYGA), 335–355 (AFYM…IILL), 378–398 (FALM…LVGF), 408–428 (VVSA…VISA), and 457–477 (LVLS…DFWM).

This sequence belongs to the complex I subunit 2 family. As to quaternary structure, NDH-1 is composed of 14 different subunits. Subunits NuoA, H, J, K, L, M, N constitute the membrane sector of the complex.

It localises to the cell inner membrane. The enzyme catalyses a quinone + NADH + 5 H(+)(in) = a quinol + NAD(+) + 4 H(+)(out). Its function is as follows. NDH-1 shuttles electrons from NADH, via FMN and iron-sulfur (Fe-S) centers, to quinones in the respiratory chain. The immediate electron acceptor for the enzyme in this species is believed to be ubiquinone. Couples the redox reaction to proton translocation (for every two electrons transferred, four hydrogen ions are translocated across the cytoplasmic membrane), and thus conserves the redox energy in a proton gradient. This Ruthia magnifica subsp. Calyptogena magnifica protein is NADH-quinone oxidoreductase subunit N.